The following is a 109-amino-acid chain: Tyrosine-protein phosphatase 6 (109 aa).

Residues 1–109 (YNINVIVMVC…SEDETTPLCV (109 aa)) form the Tyrosine-protein phosphatase domain. A substrate-binding site is contributed by aspartate 76.

It belongs to the protein-tyrosine phosphatase family.

It catalyses the reaction O-phospho-L-tyrosyl-[protein] + H2O = L-tyrosyl-[protein] + phosphate. In Styela plicata (Wrinkled sea squirt), this protein is Tyrosine-protein phosphatase 6 (STY-6).